A 393-amino-acid chain; its full sequence is STE20-related kinase adapter protein alpha (393 aa).

Serine 2 and serine 9 each carry phosphoserine. The Protein kinase domain occupies 32–341; the sequence is YELLSVIGKG…ASTLLNHSFF (310 aa). Threonine 381 carries the post-translational modification Phosphothreonine; by LKB1.

Belongs to the protein kinase superfamily. STE Ser/Thr protein kinase family. STE20 subfamily. As to quaternary structure, component of a trimeric complex composed of STK11/LKB1, STRAD (STRADA or STRADB) and CAB39/MO25 (CAB39/MO25alpha or CAB39L/MO25beta): the complex tethers STK11/LKB1 in the cytoplasm and stimulates its catalytic activity. Expressed in liver.

The protein localises to the nucleus. Its subcellular location is the cytoplasm. In terms of biological role, pseudokinase which, in complex with CAB39/MO25 (CAB39/MO25alpha or CAB39L/MO25beta), binds to and activates STK11/LKB1. Adopts a closed conformation typical of active protein kinases and binds STK11/LKB1 as a pseudosubstrate, promoting conformational change of STK11/LKB1 in an active conformation. This chain is STE20-related kinase adapter protein alpha (Strada), found in Rattus norvegicus (Rat).